The sequence spans 242 residues: Anthranilate phosphoribosyltransferase (242 aa).

5-phospho-alpha-D-ribose 1-diphosphate is bound by residues G79, 82-83 (GD), T87, 89-92 (NVST), 107-115 (KHGNRAVSS), and S119. G79 provides a ligand contact to anthranilate. S91 serves as a coordination point for Mg(2+). N110 lines the anthranilate pocket. Residue R165 coordinates anthranilate. Mg(2+)-binding residues include D224 and E225.

The protein belongs to the anthranilate phosphoribosyltransferase family. Homodimer. It depends on Mg(2+) as a cofactor.

The catalysed reaction is N-(5-phospho-beta-D-ribosyl)anthranilate + diphosphate = 5-phospho-alpha-D-ribose 1-diphosphate + anthranilate. Its pathway is amino-acid biosynthesis; L-tryptophan biosynthesis; L-tryptophan from chorismate: step 2/5. Catalyzes the transfer of the phosphoribosyl group of 5-phosphorylribose-1-pyrophosphate (PRPP) to anthranilate to yield N-(5'-phosphoribosyl)-anthranilate (PRA). The polypeptide is Anthranilate phosphoribosyltransferase (trpD) (Bacillus caldotenax).